A 3130-amino-acid polypeptide reads, in one-letter code: DNA polymerase zeta catalytic subunit (3130 aa).

6 disordered regions span residues 263–295, 425–457, 487–510, 524–548, 697–728, and 817–871; these read AIWE…VPAT, GYRG…NEPQ, LCRN…MEWS, LDGT…SSVI, PNEN…EKGN, and VTYK…EKDN. Basic and acidic residues predominate over residues 286–295; sequence SQDHRFVPAT. Over residues 497-509 the composition is skewed to acidic residues; sequence EDDDSSSGEEMEW. Composition is skewed to polar residues over residues 533–548 and 699–728; these read DNPL…SSVI and ENTL…EKGN. Over residues 828-838 the composition is skewed to basic residues; sequence SRLKLNKRKLA. Low complexity predominate over residues 842–854; the sequence is ETSTKSSETGSTK. Positions 855–866 are enriched in polar residues; that stretch reads DNFIQNNPCNSN. S1030 is subject to Phosphoserine. Disordered stretches follow at residues 1035 to 1095, 1162 to 1231, and 1537 to 1600; these read YPIY…YNAE, SRIG…DEKI, and RQQK…KLLK. Position 1041 is a phosphothreonine (T1041). 2 stretches are compositionally biased toward basic residues: residues 1043–1061 and 1166–1179; these read KKSH…KTGK and KTSR…KSKA. Residues 1213 to 1231 show a composition bias toward basic and acidic residues; it reads KTNEKGTSRKHTTLKDEKI. Residues 1540 to 1565 show a composition bias toward polar residues; it reads KAQNANTTQDPLSNKHQPNKNISGSL. Residues 1570-1589 are compositionally biased toward basic residues; it reads ANKRTRSVTSPRKPRTPRST. The span at 1590 to 1600 shows a compositional bias: basic and acidic residues; it reads KQKEKIPKLLK. S1724 bears the Phosphoserine mark. Disordered regions lie at residues 1845–1882, 1962–1984, 2017–2050, 2080–2150, and 2216–2236; these read NDML…KPLM, NPRP…SNSP, ERSK…PVVP, PTTG…SPVE, and APGL…NKKG. Positions 1847–1898 are mediates interaction with MAD2L2; the sequence is MLTPTPDSSPRSTSSPSQSKNGSFTPRTANILKPLMSPPSREEIMATLLDHD. The segment covering 1849–1865 has biased composition (low complexity); sequence TPTPDSSPRSTSSPSQS. S1967 carries the post-translational modification Phosphoserine. Positions 2080–2092 are enriched in polar residues; the sequence is PTTGCSQTASESQ. Residues 2113–2122 show a composition bias toward low complexity; it reads YYISYSSPDS. Residues 2221–2236 are compositionally biased toward polar residues; it reads PLSTEPKTQKLSNKKG. 4 residues coordinate Zn(2+): C3042, C3045, C3054, and C3057. The CysA-type zinc-finger motif lies at 3042–3057; sequence CPVCDDLTQHGICSKC. The [4Fe-4S] cluster site is built by C3086, C3089, C3099, and C3104. The short motif at 3086–3104 is the CysB motif element; sequence CKNCTGCFDRHIPCVSLNC.

This sequence belongs to the DNA polymerase type-B family. In terms of assembly, heterodimer with MAD2L2. This dimer forms the minimal DNA polymerase zeta complex (Pol-zeta2), with REV3L bearing DNA polymerase catalytic activity, although its activity is very low in this context. Component of the tetrameric Pol-zeta complex (Pol-zeta4), which consists of REV3L, MAD2L2, POLD2 and POLD3; Pol-zeta4 is the fully active form of DNA polymerase zeta. It depends on [4Fe-4S] cluster as a cofactor. Ubiquitously expressed.

The protein localises to the nucleus. It catalyses the reaction DNA(n) + a 2'-deoxyribonucleoside 5'-triphosphate = DNA(n+1) + diphosphate. Catalytic subunit of the DNA polymerase zeta complex, an error-prone polymerase specialized in translesion DNA synthesis (TLS). Lacks an intrinsic 3'-5' exonuclease activity and thus has no proofreading function. This is DNA polymerase zeta catalytic subunit (REV3L) from Homo sapiens (Human).